We begin with the raw amino-acid sequence, 460 residues long: ERAD-associated E3 ubiquitin-protein ligase HRD1B (460 aa).

Residues Met1–Gln3 lie on the Cytoplasmic side of the membrane. Residues Leu4 to Ser24 traverse the membrane as a helical segment. Over Ser25–Lys40 the chain is Lumenal. The helical transmembrane segment at Ile41 to Val61 threads the bilayer. Residues Lys62–Asp98 are Cytoplasmic-facing. A helical membrane pass occupies residues Phe99–Met119. Residues Ala120–Arg140 lie on the Lumenal side of the membrane. A helical membrane pass occupies residues Ile141–Gln161. Topologically, residues Gln162–Ser170 are cytoplasmic. The helical transmembrane segment at Met171–Val191 threads the bilayer. The Lumenal portion of the chain corresponds to Lys192–Leu225. The chain crosses the membrane as a helical span at residues Ser226–Ile246. Topologically, residues Arg247 to Ala460 are cytoplasmic. The RING-type; atypical zinc-finger motif lies at Cys292 to Arg330. Positions Ala339–Met378 are disordered. Low complexity predominate over residues Ser353–Ser375.

It belongs to the HRD1 family.

The protein localises to the endoplasmic reticulum membrane. The catalysed reaction is S-ubiquitinyl-[E2 ubiquitin-conjugating enzyme]-L-cysteine + [acceptor protein]-L-lysine = [E2 ubiquitin-conjugating enzyme]-L-cysteine + N(6)-ubiquitinyl-[acceptor protein]-L-lysine.. It participates in protein modification; protein ubiquitination. Probable component of the HRD1 ubiquitin ligase complex that mediates the rapid degradation of misfolded endoplasmic reticulum (ER) proteins, a process called ER-associated degradation (ERAD). Targets the misfolded LRR receptor kinase BRI1. Functions redundantly with HRD3A. The protein is ERAD-associated E3 ubiquitin-protein ligase HRD1B of Arabidopsis thaliana (Mouse-ear cress).